We begin with the raw amino-acid sequence, 133 residues long: Thioredoxin-2, mitochondrial (133 aa).

Residues Met1–Arg29 constitute a mitochondrion transit peptide. In terms of domain architecture, Thioredoxin spans Lys30–Glu133. Catalysis depends on nucleophile residues Cys59 and Cys62. Cys59 and Cys62 are oxidised to a cystine.

It belongs to the thioredoxin family. In terms of assembly, interacts with arg3.

Its subcellular location is the mitochondrion. Disulfide reductase which serves multiple functions in mitochondria, protecting mitochondrial components against thiol-oxidative damage as a thiol-disulfide oxidoreductase, and supporting urea cycle and respiration in mitochondria in a manner independent of active site thiols. This is Thioredoxin-2, mitochondrial (trx2) from Schizosaccharomyces pombe (strain 972 / ATCC 24843) (Fission yeast).